Consider the following 483-residue polypeptide: Serralysin (483 aa).

A Zn(2+)-binding site is contributed by histidine 184. Glutamate 185 is a catalytic residue. Residues histidine 188 and histidine 194 each coordinate Zn(2+). Arginine 263, aspartate 266, aspartate 295, glycine 297, glycine 298, aspartate 300, threonine 337, and glutamate 339 together coordinate Ca(2+). Hemolysin-type calcium-binding repeat units follow at residues 342–359 and 360–377; these read IGGS…ENIL and KGGA…ADQL.

This sequence belongs to the peptidase M10B family. It depends on Zn(2+) as a cofactor. Ca(2+) is required as a cofactor.

It localises to the secreted. It catalyses the reaction Preferential cleavage of bonds with hydrophobic residues in P1'.. Its activity is regulated as follows. Inhibited by 8 mM 1,10-phenanthroline and 10 mM EDTA, but not by PMSF. Its function is as follows. Involved in the inhibition of insect antibacterial peptides. Reduces the antibacterial activity of G.mellonella hemolymph by 50%. Reduces the antibacterial activity of cecropin A by 80% and cecropin B by 75%. The polypeptide is Serralysin (Photorhabdus sp. (strain Az29)).